The following is a 1279-amino-acid chain: ATP-dependent helicase/nuclease subunit A (1279 aa).

Residues 4-499 (TKWTDEQRQA…VKLFKNFRSR (496 aa)) form the UvrD-like helicase ATP-binding domain. ATP is bound at residue 25–32 (AGAGAGKT). Residues 526–853 (EEALKVGASY…RIMSIHKSKG (328 aa)) form the UvrD-like helicase C-terminal domain.

This sequence belongs to the helicase family. AddA subfamily. In terms of assembly, heterodimer of AddA and AddB/RexB. The cofactor is Mg(2+).

It catalyses the reaction Couples ATP hydrolysis with the unwinding of duplex DNA by translocating in the 3'-5' direction.. The catalysed reaction is ATP + H2O = ADP + phosphate + H(+). Its function is as follows. The heterodimer acts as both an ATP-dependent DNA helicase and an ATP-dependent, dual-direction single-stranded exonuclease. Recognizes the chi site generating a DNA molecule suitable for the initiation of homologous recombination. The AddA nuclease domain is required for chi fragment generation; this subunit has the helicase and 3' -&gt; 5' nuclease activities. This chain is ATP-dependent helicase/nuclease subunit A, found in Clostridium botulinum (strain 657 / Type Ba4).